Reading from the N-terminus, the 190-residue chain is Peptidyl-tRNA hydrolase (190 aa).

Phenylalanine 14 is a tRNA binding site. The active-site Proton acceptor is histidine 19. TRNA-binding residues include methionine 64, asparagine 66, and asparagine 112.

It belongs to the PTH family. As to quaternary structure, monomer.

The protein resides in the cytoplasm. It catalyses the reaction an N-acyl-L-alpha-aminoacyl-tRNA + H2O = an N-acyl-L-amino acid + a tRNA + H(+). In terms of biological role, hydrolyzes ribosome-free peptidyl-tRNAs (with 1 or more amino acids incorporated), which drop off the ribosome during protein synthesis, or as a result of ribosome stalling. Its function is as follows. Catalyzes the release of premature peptidyl moieties from peptidyl-tRNA molecules trapped in stalled 50S ribosomal subunits, and thus maintains levels of free tRNAs and 50S ribosomes. In Staphylococcus epidermidis (strain ATCC 35984 / DSM 28319 / BCRC 17069 / CCUG 31568 / BM 3577 / RP62A), this protein is Peptidyl-tRNA hydrolase.